Here is a 30-residue protein sequence, read N- to C-terminus: Photosystem I reaction center subunit XII (30 aa).

The helical transmembrane segment at 7–29 threads the bilayer; the sequence is VYIALMAALLASVLAIRLGATLY.

It belongs to the PsaM family.

The protein localises to the plastid. The protein resides in the chloroplast thylakoid membrane. The chain is Photosystem I reaction center subunit XII from Thalassiosira pseudonana (Marine diatom).